Here is a 266-residue protein sequence, read N- to C-terminus: rRNA adenine N-6-methyltransferase (266 aa).

His-14, Thr-16, Gly-41, Glu-62, Asp-87, and Asn-103 together coordinate S-adenosyl-L-methionine.

Belongs to the class I-like SAM-binding methyltransferase superfamily. rRNA adenine N(6)-methyltransferase family.

In terms of biological role, involved in erythromycin resistance. This is rRNA adenine N-6-methyltransferase (ermFU) from Bacteroides fragilis.